The following is a 92-amino-acid chain: Small ribosomal subunit protein uS19c (92 aa).

It belongs to the universal ribosomal protein uS19 family.

Its subcellular location is the plastid. It is found in the chloroplast. Functionally, protein S19 forms a complex with S13 that binds strongly to the 16S ribosomal RNA. This Ceratophyllum demersum (Rigid hornwort) protein is Small ribosomal subunit protein uS19c.